Reading from the N-terminus, the 757-residue chain is 5-methyltetrahydropteroyltriglutamate--homocysteine methyltransferase (757 aa).

5-methyltetrahydropteroyltri-L-glutamate is bound by residues 16–19 (RELK) and Lys-112. L-homocysteine is bound by residues 433-435 (IGS) and Glu-486. Residues 433–435 (IGS) and Glu-486 each bind L-methionine. 5-methyltetrahydropteroyltri-L-glutamate contacts are provided by residues 517–518 (RC) and Trp-563. Residue Asp-601 participates in L-homocysteine binding. An L-methionine-binding site is contributed by Asp-601. Residue Glu-607 participates in 5-methyltetrahydropteroyltri-L-glutamate binding. Residues His-643, Cys-645, and Glu-667 each contribute to the Zn(2+) site. The active-site Proton donor is the His-696. Cys-728 lines the Zn(2+) pocket.

Belongs to the vitamin-B12 independent methionine synthase family. Requires Zn(2+) as cofactor.

It catalyses the reaction 5-methyltetrahydropteroyltri-L-glutamate + L-homocysteine = tetrahydropteroyltri-L-glutamate + L-methionine. It functions in the pathway amino-acid biosynthesis; L-methionine biosynthesis via de novo pathway; L-methionine from L-homocysteine (MetE route): step 1/1. Its function is as follows. Catalyzes the transfer of a methyl group from 5-methyltetrahydrofolate to homocysteine resulting in methionine formation. In Histophilus somni (strain 2336) (Haemophilus somnus), this protein is 5-methyltetrahydropteroyltriglutamate--homocysteine methyltransferase.